The sequence spans 185 residues: Ribosome-recycling factor (185 aa).

It belongs to the RRF family.

It is found in the cytoplasm. Its function is as follows. Responsible for the release of ribosomes from messenger RNA at the termination of protein biosynthesis. May increase the efficiency of translation by recycling ribosomes from one round of translation to another. The polypeptide is Ribosome-recycling factor (Parafrankia sp. (strain EAN1pec)).